An 853-amino-acid chain; its full sequence is Protein translocase subunit SecA (853 aa).

ATP-binding positions include Gln77, 95-99, and Asp532; that span reads GEGKT.

Belongs to the SecA family. Monomer and homodimer. Part of the essential Sec protein translocation apparatus which comprises SecA, SecYEG and auxiliary proteins SecDF. Other proteins may also be involved.

It localises to the cell inner membrane. The protein resides in the cytoplasm. It catalyses the reaction ATP + H2O + cellular proteinSide 1 = ADP + phosphate + cellular proteinSide 2.. Part of the Sec protein translocase complex. Interacts with the SecYEG preprotein conducting channel. Has a central role in coupling the hydrolysis of ATP to the transfer of proteins into and across the cell membrane, serving as an ATP-driven molecular motor driving the stepwise translocation of polypeptide chains across the membrane. In Thermosipho melanesiensis (strain DSM 12029 / CIP 104789 / BI429), this protein is Protein translocase subunit SecA.